The primary structure comprises 408 residues: Aminoacylase-1A (408 aa).

H80 provides a ligand contact to Zn(2+). The active site involves D82. Residue D113 coordinates Zn(2+). The Proton acceptor role is filled by E147. Residues E148, E175, and H373 each coordinate Zn(2+). Residue S408 is modified to Phosphoserine.

It belongs to the peptidase M20A family. Homodimer. The cofactor is Zn(2+). Post-translationally, the N-terminus is blocked.

Its subcellular location is the cytoplasm. It carries out the reaction an N-acyl-L-amino acid + H2O = an L-alpha-amino acid + a carboxylate. The catalysed reaction is an N-acetyl-L-cysteine-S-conjugate + H2O = an S-substituted L-cysteine + acetate. Involved in the hydrolysis of N-acylated or N-acetylated amino acids (except L-aspartate). This is Aminoacylase-1A (Acy1a) from Rattus norvegicus (Rat).